Consider the following 102-residue polypeptide: Small ribosomal subunit protein uS10 (102 aa).

This sequence belongs to the universal ribosomal protein uS10 family. Part of the 30S ribosomal subunit.

In terms of biological role, involved in the binding of tRNA to the ribosomes. The chain is Small ribosomal subunit protein uS10 from Clostridium beijerinckii (strain ATCC 51743 / NCIMB 8052) (Clostridium acetobutylicum).